The following is a 512-amino-acid chain: Lysine--tRNA ligase (512 aa).

2 residues coordinate Mg(2+): Glu421 and Glu428.

The protein belongs to the class-II aminoacyl-tRNA synthetase family. In terms of assembly, homodimer. Requires Mg(2+) as cofactor.

The protein localises to the cytoplasm. The catalysed reaction is tRNA(Lys) + L-lysine + ATP = L-lysyl-tRNA(Lys) + AMP + diphosphate. The chain is Lysine--tRNA ligase from Aeromonas salmonicida (strain A449).